The primary structure comprises 855 residues: Dynein axonemal assembly factor 5 (855 aa).

Alanine 2 is modified (N-acetylalanine). 10 HEAT repeats span residues 71–109 (GPWARLLLPRLLRCLSDPAEGCRALAVHLLDLGLRRAAR), 202–240 (HMQSESLIGPLMQTISHQHWKVRVAAIEATGAVIHFGNG), 241–278 (KSVDDVLSHFAQRLFDDVPQVRRAVASVVGGWLLCLRD), 280–318 (YSFFHKLIPLLLSSLNDEVPEVRQLAASLWEDVGLQWQK), 354–376 (FRNLSKILPALCHDITDWVVGTR), 377–414 (VKSAQLLPVLLLHAEDHATQHLEVVLRTLFQACTDEEA), 599–638 (GEALPHVVPTLRACLQPSQDPQMRLKLFSILSTVLLRATD), 696–734 (RDVQETLMPQVLTTLEEDSKMTRLISCRIINTFLKTSGG), 738–776 (PEKLIRIYPELLKRLDDVSNDVRMAAASTLVTWLQCVKG), and 784–822 (QSSVQYLYRELLVHLDDPERAIQDAILEVLKEGSGLFPD).

The protein belongs to the DNAAF5 family. Interacts with DNAI2; probably involved in outer arm dynein assembly. As to expression, expressed in nasal epithelium and lung epithelium by ciliated cells (at protein level).

It is found in the cytoplasm. The protein localises to the dynein axonemal particle. Functionally, cytoplasmic protein involved in the delivery of the dynein machinery to the motile cilium. It is required for the assembly of the axonemal dynein inner and outer arms, two structures attached to the peripheral outer doublet A microtubule of the axoneme, that play a crucial role in cilium motility. This Homo sapiens (Human) protein is Dynein axonemal assembly factor 5.